Here is a 305-residue protein sequence, read N- to C-terminus: Probable 5-dehydro-4-deoxyglucarate dehydratase (305 aa).

This sequence belongs to the DapA family.

The enzyme catalyses 5-dehydro-4-deoxy-D-glucarate + H(+) = 2,5-dioxopentanoate + CO2 + H2O. It functions in the pathway carbohydrate acid metabolism; D-glucarate degradation; 2,5-dioxopentanoate from D-glucarate: step 2/2. The sequence is that of Probable 5-dehydro-4-deoxyglucarate dehydratase from Pseudomonas entomophila (strain L48).